The chain runs to 145 residues: Ribosome maturation factor RimP (145 aa).

The protein belongs to the RimP family.

The protein localises to the cytoplasm. In terms of biological role, required for maturation of 30S ribosomal subunits. In Azotobacter vinelandii (strain DJ / ATCC BAA-1303), this protein is Ribosome maturation factor RimP.